A 436-amino-acid chain; its full sequence is Citrate synthase (436 aa).

Catalysis depends on residues H311 and D370.

Belongs to the citrate synthase family. Homohexamer.

It carries out the reaction oxaloacetate + acetyl-CoA + H2O = citrate + CoA + H(+). The protein operates within carbohydrate metabolism; tricarboxylic acid cycle; isocitrate from oxaloacetate: step 1/2. Its activity is regulated as follows. Allosterically inhibited by NADH. The protein is Citrate synthase (gltA) of Rickettsia prowazekii (strain Madrid E).